The sequence spans 318 residues: Curved DNA-binding protein (318 aa).

The J domain occupies 5–69; it reads DYYKILGVEP…QKRAEFDEIR (65 aa). Residues 111–130 form a disordered region; the sequence is GGGNPFGGARQQQRSAGRRG.

Its subcellular location is the cytoplasm. It localises to the nucleoid. Functionally, DNA-binding protein that preferentially recognizes a curved DNA sequence. It is probably a functional analog of DnaJ; displays overlapping activities with DnaJ, but functions under different conditions, probably acting as a molecular chaperone in an adaptive response to environmental stresses other than heat shock. Lacks autonomous chaperone activity; binds native substrates and targets them for recognition by DnaK. Its activity is inhibited by the binding of CbpM. The polypeptide is Curved DNA-binding protein (Pseudomonas putida (strain GB-1)).